Reading from the N-terminus, the 534-residue chain is 5,6-dihydroxyindole-2-carboxylic acid oxidase (534 aa).

Residues 1 to 23 form the signal peptide; the sequence is MLGPATFLPLTAALLLLIPGGRA. Topologically, residues 24–477 are lumenal, melanosome; the sequence is QFPRQCVTPE…WPSRALNFTE (454 aa). 5 disulfide bridges follow: Cys-29–Cys-40, Cys-41–Cys-65, Cys-56–Cys-99, Cys-101–Cys-110, and Cys-113–Cys-122. N-linked (GlcNAc...) asparagine glycans are attached at residues Asn-96 and Asn-104. N-linked (GlcNAc...) asparagine glycans are attached at residues Asn-175 and Asn-181. Zn(2+)-binding residues include His-192, His-215, and His-224. Intrachain disulfides connect Cys-258–Cys-261 and Cys-290–Cys-303. Residues Asn-304 and Asn-350 are each glycosylated (N-linked (GlcNAc...) asparagine). Zn(2+)-binding residues include His-377 and His-381. Asn-385 carries an N-linked (GlcNAc...) asparagine glycan. Residue His-404 coordinates Zn(2+). A helical transmembrane segment spans residues 478–501; the sequence is IITIAVVAALVLVAVIFAAASCAV. Residues 502–534 are Cytoplasmic-facing; sequence HRSRKDDVHQPLLGEQYPRYSEEYERDASQSAV.

The protein belongs to the tyrosinase family. Cu(2+) serves as cofactor. Zn(2+) is required as a cofactor.

It localises to the melanosome membrane. The catalysed reaction is 2 5,6-dihydroxyindole-2-carboxylate + O2 = 2 indole-5,6-quinone-2-carboxylate + 2 H2O. It participates in pigment biosynthesis; melanin biosynthesis. Functionally, plays a role in melanin biosynthesis. Catalyzes the oxidation of 5,6-dihydroxyindole-2-carboxylic acid (DHICA) into indole-5,6-quinone-2-carboxylic acid. May regulate or influence the type of melanin synthesized. Also to a lower extent, capable of hydroxylating tyrosine and producing melanin. In Ambystoma mexicanum (Axolotl), this protein is 5,6-dihydroxyindole-2-carboxylic acid oxidase (TYRP1).